The primary structure comprises 388 residues: tRNA 2-selenouridine synthase (388 aa).

Positions 15–138 constitute a Rhodanese domain; the sequence is FTADTPLIDV…ARQFLINTID (124 aa). Catalysis depends on Cys-98, which acts as the S-selanylcysteine intermediate.

This sequence belongs to the SelU family. In terms of assembly, monomer.

It carries out the reaction 5-methylaminomethyl-2-thiouridine(34) in tRNA + selenophosphate + (2E)-geranyl diphosphate + H2O + H(+) = 5-methylaminomethyl-2-selenouridine(34) in tRNA + (2E)-thiogeraniol + phosphate + diphosphate. The catalysed reaction is 5-methylaminomethyl-2-thiouridine(34) in tRNA + (2E)-geranyl diphosphate = 5-methylaminomethyl-S-(2E)-geranyl-thiouridine(34) in tRNA + diphosphate. The enzyme catalyses 5-methylaminomethyl-S-(2E)-geranyl-thiouridine(34) in tRNA + selenophosphate + H(+) = 5-methylaminomethyl-2-(Se-phospho)selenouridine(34) in tRNA + (2E)-thiogeraniol. It catalyses the reaction 5-methylaminomethyl-2-(Se-phospho)selenouridine(34) in tRNA + H2O = 5-methylaminomethyl-2-selenouridine(34) in tRNA + phosphate. Functionally, involved in the post-transcriptional modification of the uridine at the wobble position (U34) of tRNA(Lys), tRNA(Glu) and tRNA(Gln). Catalyzes the conversion of 2-thiouridine (S2U-RNA) to 2-selenouridine (Se2U-RNA). Acts in a two-step process involving geranylation of 2-thiouridine (S2U) to S-geranyl-2-thiouridine (geS2U) and subsequent selenation of the latter derivative to 2-selenouridine (Se2U) in the tRNA chain. The sequence is that of tRNA 2-selenouridine synthase from Nitrosomonas eutropha (strain DSM 101675 / C91 / Nm57).